The following is a 527-amino-acid chain: Heat shock factor protein HSF8 (527 aa).

Residues 1-13 show a composition bias toward low complexity; sequence MEPNSSGSGKAAV. Disordered regions lie at residues 1–37, 130–160, 243–275, 300–343, and 476–501; these read MEPN…PSAN, RRKP…HSAS, NESN…ADGQ, SPRL…TSGK, and QSPS…QING. Positions 25–37 are enriched in pro residues; sequence QPAPAPAPMPSAN. The DNA-binding element occupies 39-133; sequence PPPFLVKTYD…LLKSISRRKP (95 aa). Low complexity predominate over residues 136–157; that stretch reads GHAQQQQQPHGHAQQQMQPPGH. Composition is skewed to polar residues over residues 319-328 and 491-501; these read SPQSNASSGR and NTSETKPQING.

Belongs to the HSF family. In terms of assembly, homotrimer. Post-translationally, exhibits temperature-dependent phosphorylation.

The protein localises to the nucleus. DNA-binding protein that specifically binds heat shock promoter elements (HSE) and activates transcription. This chain is Heat shock factor protein HSF8 (HSF8), found in Solanum peruvianum (Peruvian tomato).